The primary structure comprises 267 residues: Hydroxyacylglutathione hydrolase (267 aa).

Positions 55, 57, 59, 60, 121, 138, and 176 each coordinate Zn(2+).

This sequence belongs to the metallo-beta-lactamase superfamily. Glyoxalase II family. As to quaternary structure, monomer. Requires Zn(2+) as cofactor.

The catalysed reaction is an S-(2-hydroxyacyl)glutathione + H2O = a 2-hydroxy carboxylate + glutathione + H(+). The protein operates within secondary metabolite metabolism; methylglyoxal degradation; (R)-lactate from methylglyoxal: step 2/2. Thiolesterase that catalyzes the hydrolysis of S-D-lactoyl-glutathione to form glutathione and D-lactic acid. The chain is Hydroxyacylglutathione hydrolase from Shewanella sp. (strain ANA-3).